The chain runs to 162 residues: Nucleotide-binding protein ABSDF0503 (162 aa).

The protein belongs to the YajQ family.

Nucleotide-binding protein. The chain is Nucleotide-binding protein ABSDF0503 from Acinetobacter baumannii (strain SDF).